The sequence spans 187 residues: Large ribosomal subunit protein uL22 (187 aa).

Belongs to the universal ribosomal protein uL22 family.

This chain is Large ribosomal subunit protein uL22 (RPL17), found in Theileria parva (East coast fever infection agent).